Consider the following 101-residue polypeptide: Small ribosomal subunit protein uS14 (101 aa).

The protein belongs to the universal ribosomal protein uS14 family. As to quaternary structure, part of the 30S ribosomal subunit. Contacts proteins S3 and S10.

Functionally, binds 16S rRNA, required for the assembly of 30S particles and may also be responsible for determining the conformation of the 16S rRNA at the A site. The protein is Small ribosomal subunit protein uS14 of Anaplasma phagocytophilum (strain HZ).